The following is a 326-amino-acid chain: L-threo-3-hydroxyaspartate ammonia-lyase (326 aa).

An N6-(pyridoxal phosphate)lysine modification is found at K53. Pyridoxal 5'-phosphate contacts are provided by residues N80, 179 to 183 (GGGGL), and S304.

This sequence belongs to the serine/threonine dehydratase family. As to quaternary structure, monomer. Requires pyridoxal 5'-phosphate as cofactor. Mn(2+) is required as a cofactor. The cofactor is Mg(2+). Ca(2+) serves as cofactor.

The enzyme catalyses (3S)-3-hydroxy-L-aspartate = oxaloacetate + NH4(+). Its activity is regulated as follows. Is strongly inhibited by hydroxylamine and EDTA in vitro. Its function is as follows. Catalyzes the deamination of L-threo-3-hydroxyaspartate to oxaloacetate and ammonia. Shows a high specificity towards L-threo-3-hydroxyaspartate as other 3-hydroxyaminoacids, i.e. D,L-erythro- and D-threo-3-hydroxyaspartate, D-threonine, L-threonine, D,L-allothreonine, D-serine, and L-serine, are not substrates for this enzyme. Exhibits no detectable serine racemase activity. Is responsible for the 3-hydroxyaspartate resistance of S.cerevisiae, and thus may be involved in the detoxification of naturally occurring 3-hydroxyaspartate. In Saccharomyces cerevisiae (strain ATCC 204508 / S288c) (Baker's yeast), this protein is L-threo-3-hydroxyaspartate ammonia-lyase (SRY1).